We begin with the raw amino-acid sequence, 237 residues long: V-type proton ATPase subunit E (237 aa).

Belongs to the V-ATPase E subunit family. V-ATPase is a heteromultimeric enzyme composed of a peripheral catalytic V1 complex (components A to H) attached to an integral membrane V0 proton pore complex (components: a, c, c', c'' and d).

Functionally, subunit of the peripheral V1 complex of vacuolar ATPase essential for assembly or catalytic function. V-ATPase is responsible for acidifying a variety of intracellular compartments in eukaryotic cells. The sequence is that of V-type proton ATPase subunit E (VATE) from Gossypium hirsutum (Upland cotton).